A 332-amino-acid chain; its full sequence is L-lactate dehydrogenase A chain (332 aa).

N-acetylalanine is present on Ala2. N6-acetyllysine; alternate is present on Lys5. N6-succinyllysine; alternate is present on Lys5. An N6-acetyllysine modification is found at Lys14. 29–57 (GAVGMACAISILMKDLADELALVDVMEDK) provides a ligand contact to NAD(+). Lys57 bears the N6-acetyllysine; alternate mark. A Glycyl lysine isopeptide (Lys-Gly) (interchain with G-Cter in SUMO2); alternate cross-link involves residue Lys57. The residue at position 81 (Lys81) is an N6-acetyllysine. Arg99 provides a ligand contact to NAD(+). Arg106 contacts substrate. Residue Lys118 is modified to N6-acetyllysine; alternate. N6-succinyllysine; alternate is present on Lys118. Lys126 carries the post-translational modification N6-acetyllysine. Asn138 provides a ligand contact to NAD(+). Substrate is bound by residues Asn138 and Arg169. His193 serves as the catalytic Proton acceptor. 2 positions are modified to N6-acetyllysine: Lys224 and Lys232. Tyr239 is modified (phosphotyrosine). N6-acetyllysine is present on Lys243. Thr248 is a binding site for substrate. Position 309 is a phosphothreonine (Thr309). Lys318 is modified (N6-acetyllysine; alternate). At Lys318 the chain carries N6-succinyllysine; alternate. Thr322 carries the phosphothreonine modification.

This sequence belongs to the LDH/MDH superfamily. LDH family. In terms of assembly, homotetramer. Interacts with PTEN upstream reading frame protein MP31. ISGylated.

The protein resides in the cytoplasm. It carries out the reaction (S)-lactate + NAD(+) = pyruvate + NADH + H(+). It functions in the pathway fermentation; pyruvate fermentation to lactate; (S)-lactate from pyruvate: step 1/1. Functionally, interconverts simultaneously and stereospecifically pyruvate and lactate with concomitant interconversion of NADH and NAD(+). This Mus musculus (Mouse) protein is L-lactate dehydrogenase A chain (Ldha).